The sequence spans 154 residues: Endoribonuclease YbeY (154 aa).

Residues H114, H118, and H124 each coordinate Zn(2+).

Belongs to the endoribonuclease YbeY family. Requires Zn(2+) as cofactor.

It localises to the cytoplasm. Functionally, single strand-specific metallo-endoribonuclease involved in late-stage 70S ribosome quality control and in maturation of the 3' terminus of the 16S rRNA. In Haemophilus influenzae (strain PittEE), this protein is Endoribonuclease YbeY.